Consider the following 315-residue polypeptide: Putative quercetin 2,3-dioxygenase PA1205 (315 aa).

4 residues coordinate a divalent metal cation: histidine 77, histidine 79, histidine 121, and glutamate 123.

This sequence belongs to the pirin family. The cofactor is a divalent metal cation.

It carries out the reaction quercetin + O2 = 2-(3,4-dihydroxybenzoyloxy)-4,6-dihydroxybenzoate + CO. Its pathway is flavonoid metabolism; quercetin degradation. Putative quercetin 2,3-dioxygenase. In Pseudomonas aeruginosa (strain ATCC 15692 / DSM 22644 / CIP 104116 / JCM 14847 / LMG 12228 / 1C / PRS 101 / PAO1), this protein is Putative quercetin 2,3-dioxygenase PA1205.